Reading from the N-terminus, the 568-residue chain is Proline--tRNA ligase (568 aa).

Belongs to the class-II aminoacyl-tRNA synthetase family. ProS type 1 subfamily. In terms of assembly, homodimer.

The protein localises to the cytoplasm. It catalyses the reaction tRNA(Pro) + L-proline + ATP = L-prolyl-tRNA(Pro) + AMP + diphosphate. Functionally, catalyzes the attachment of proline to tRNA(Pro) in a two-step reaction: proline is first activated by ATP to form Pro-AMP and then transferred to the acceptor end of tRNA(Pro). As ProRS can inadvertently accommodate and process non-cognate amino acids such as alanine and cysteine, to avoid such errors it has two additional distinct editing activities against alanine. One activity is designated as 'pretransfer' editing and involves the tRNA(Pro)-independent hydrolysis of activated Ala-AMP. The other activity is designated 'posttransfer' editing and involves deacylation of mischarged Ala-tRNA(Pro). The misacylated Cys-tRNA(Pro) is not edited by ProRS. The chain is Proline--tRNA ligase from Chlamydia pneumoniae (Chlamydophila pneumoniae).